A 416-amino-acid polypeptide reads, in one-letter code: Serine hydroxymethyltransferase (416 aa).

(6S)-5,6,7,8-tetrahydrofolate-binding positions include L121 and 125–127 (GHL). Residue K229 is modified to N6-(pyridoxal phosphate)lysine.

Belongs to the SHMT family. Homodimer. Pyridoxal 5'-phosphate serves as cofactor.

It localises to the cytoplasm. It catalyses the reaction (6R)-5,10-methylene-5,6,7,8-tetrahydrofolate + glycine + H2O = (6S)-5,6,7,8-tetrahydrofolate + L-serine. Its pathway is one-carbon metabolism; tetrahydrofolate interconversion. The protein operates within amino-acid biosynthesis; glycine biosynthesis; glycine from L-serine: step 1/1. In terms of biological role, catalyzes the reversible interconversion of serine and glycine with tetrahydrofolate (THF) serving as the one-carbon carrier. This reaction serves as the major source of one-carbon groups required for the biosynthesis of purines, thymidylate, methionine, and other important biomolecules. Also exhibits THF-independent aldolase activity toward beta-hydroxyamino acids, producing glycine and aldehydes, via a retro-aldol mechanism. This chain is Serine hydroxymethyltransferase, found in Neisseria gonorrhoeae (strain NCCP11945).